Reading from the N-terminus, the 37-residue chain is Cytochrome b6-f complex subunit 5 (37 aa).

Residues 5–25 form a helical membrane-spanning segment; it reads LLSGIVLGLIPITLAGLFVTA.

This sequence belongs to the PetG family. The 4 large subunits of the cytochrome b6-f complex are cytochrome b6, subunit IV (17 kDa polypeptide, PetD), cytochrome f and the Rieske protein, while the 4 small subunits are PetG, PetL, PetM and PetN. The complex functions as a dimer.

The protein resides in the plastid. It localises to the chloroplast thylakoid membrane. Component of the cytochrome b6-f complex, which mediates electron transfer between photosystem II (PSII) and photosystem I (PSI), cyclic electron flow around PSI, and state transitions. PetG is required for either the stability or assembly of the cytochrome b6-f complex. In Angiopteris evecta (Mule's foot fern), this protein is Cytochrome b6-f complex subunit 5.